A 285-amino-acid chain; its full sequence is Malonyl-[acyl-carrier protein] O-methyltransferase (285 aa).

Belongs to the methyltransferase superfamily.

It carries out the reaction malonyl-[ACP] + S-adenosyl-L-methionine = malonyl-[ACP] methyl ester + S-adenosyl-L-homocysteine. The protein operates within cofactor biosynthesis; biotin biosynthesis. Functionally, converts the free carboxyl group of a malonyl-thioester to its methyl ester by transfer of a methyl group from S-adenosyl-L-methionine (SAM). It allows to synthesize pimeloyl-ACP via the fatty acid synthetic pathway. This Bacillus cytotoxicus (strain DSM 22905 / CIP 110041 / 391-98 / NVH 391-98) protein is Malonyl-[acyl-carrier protein] O-methyltransferase.